The chain runs to 147 residues: Lysozyme C (147 aa).

The first 18 residues, 1-18 (MRSLLVLVLCFLPLAALG), serve as a signal peptide directing secretion. Residues 19-147 (KVYGRCELAA…VNAWIRGCRL (129 aa)) form the C-type lysozyme domain. Disulfide bonds link C24–C145, C48–C133, C82–C98, and C94–C112. Residues E53 and D70 contribute to the active site.

This sequence belongs to the glycosyl hydrolase 22 family. In terms of assembly, monomer.

Its subcellular location is the secreted. The enzyme catalyses Hydrolysis of (1-&gt;4)-beta-linkages between N-acetylmuramic acid and N-acetyl-D-glucosamine residues in a peptidoglycan and between N-acetyl-D-glucosamine residues in chitodextrins.. Its function is as follows. Lysozymes have primarily a bacteriolytic function; those in tissues and body fluids are associated with the monocyte-macrophage system and enhance the activity of immunoagents. In Coturnix japonica (Japanese quail), this protein is Lysozyme C (LYZ).